Here is a 313-residue protein sequence, read N- to C-terminus: 7,8-didemethyl-8-hydroxy-5-deazariboflavin synthase (313 aa).

Residues 4–235 (ITYSPAYTLV…AEITLQIPPN (232 aa)) enclose the Radical SAM core domain. 3 residues coordinate [4Fe-4S] cluster: Cys18, Cys22, and Cys25.

The protein belongs to the radical SAM superfamily. CofG family. As to quaternary structure, consists of two subunits, CofG and CofH. [4Fe-4S] cluster serves as cofactor.

The enzyme catalyses 5-amino-5-(4-hydroxybenzyl)-6-(D-ribitylimino)-5,6-dihydrouracil + S-adenosyl-L-methionine = 7,8-didemethyl-8-hydroxy-5-deazariboflavin + 5'-deoxyadenosine + L-methionine + NH4(+) + H(+). It functions in the pathway cofactor biosynthesis; coenzyme F0 biosynthesis. Catalyzes the radical-mediated synthesis of 7,8-didemethyl-8-hydroxy-5-deazariboflavin from 5-amino-5-(4-hydroxybenzyl)-6-(D-ribitylimino)-5,6-dihydrouracil. The polypeptide is 7,8-didemethyl-8-hydroxy-5-deazariboflavin synthase (Synechocystis sp. (strain ATCC 27184 / PCC 6803 / Kazusa)).